Here is a 324-residue protein sequence, read N- to C-terminus: Olfactory receptor 6K2 (324 aa).

Residues 1–25 (MESPNRTTIQEFIFSAFPYSWVKSV) lie on the Extracellular side of the membrane. N-linked (GlcNAc...) asparagine glycosylation occurs at Asn5. Residues 26-46 (VCFVPLLFIYAFIVVGNLVII) traverse the membrane as a helical segment. The Cytoplasmic segment spans residues 47-54 (TVVQLNTH). Residues 55 to 75 (LHTPMYTFISALSFLEIWYTT) traverse the membrane as a helical segment. Topologically, residues 76–98 (ATIPKMLSSLLSERSISFNGCLL) are extracellular. Residues Cys96 and Cys188 are joined by a disulfide bond. A helical membrane pass occupies residues 99–119 (QMYFFHSTGICEVCLLTVMAF). Residues 120–138 (DHYLAICSPLHYPSIMTPK) lie on the Cytoplasmic side of the membrane. The chain crosses the membrane as a helical span at residues 139 to 159 (LCTQLTLSCCVCGFITPLPEI). Residues 160-198 (AWISTLPFCGSNHLEHIFCDFLPVLRLACTDTRAIVMIQ) lie on the Extracellular side of the membrane. The helical transmembrane segment at 199-218 (VVDVIHAVEIITAVMLIFMS) threads the bilayer. Topologically, residues 219-238 (YDGIVAVILRIHSAGGRRTA) are cytoplasmic. A helical transmembrane segment spans residues 239 to 259 (FSTCVSHFIVFSLFFGSVTLM). Residues 260-272 (YLRFSATYSLFWD) lie on the Extracellular side of the membrane. The chain crosses the membrane as a helical span at residues 273–293 (IAIALAFAVLSPFFNPIIYSL). At 294–324 (RNKEIKEAIKKHIGQAKIFFSVRPGTSSKIF) the chain is on the cytoplasmic side.

It belongs to the G-protein coupled receptor 1 family.

Its subcellular location is the cell membrane. Functionally, odorant receptor. The chain is Olfactory receptor 6K2 (OR6K2) from Homo sapiens (Human).